The sequence spans 255 residues: Small ribosomal subunit protein eS1B (255 aa).

The residue at position 2 (Ala-2) is an N-acetylalanine; partial. At Ser-245 the chain carries Phosphoserine. A Glycyl lysine isopeptide (Lys-Gly) (interchain with G-Cter in ubiquitin) cross-link involves residue Lys-248. The residue at position 254 (Thr-254) is a Phosphothreonine.

It belongs to the eukaryotic ribosomal protein eS1 family. In terms of assembly, component of the small ribosomal subunit. Mature ribosomes consist of a small (40S) and a large (60S) subunit. The 40S subunit contains about 33 different proteins and 1 molecule of RNA (18S). The 60S subunit contains about 49 different proteins and 3 molecules of RNA (25S, 5.8S and 5S).

The protein localises to the cytoplasm. The chain is Small ribosomal subunit protein eS1B from Saccharomyces cerevisiae (strain JAY291) (Baker's yeast).